The following is an 88-amino-acid chain: DNA-directed RNA polymerase subunit omega (88 aa).

The protein belongs to the RNA polymerase subunit omega family. In terms of assembly, the RNAP catalytic core consists of 2 alpha, 1 beta, 1 beta' and 1 omega subunit. When a sigma factor is associated with the core the holoenzyme is formed, which can initiate transcription.

It catalyses the reaction RNA(n) + a ribonucleoside 5'-triphosphate = RNA(n+1) + diphosphate. Its function is as follows. Promotes RNA polymerase assembly. Latches the N- and C-terminal regions of the beta' subunit thereby facilitating its interaction with the beta and alpha subunits. The polypeptide is DNA-directed RNA polymerase subunit omega (Anaeromyxobacter dehalogenans (strain 2CP-1 / ATCC BAA-258)).